The chain runs to 488 residues: UDP-N-acetylmuramate--L-alanine ligase (488 aa).

127 to 133 contributes to the ATP binding site; sequence GTHGKTT.

This sequence belongs to the MurCDEF family.

It localises to the cytoplasm. It catalyses the reaction UDP-N-acetyl-alpha-D-muramate + L-alanine + ATP = UDP-N-acetyl-alpha-D-muramoyl-L-alanine + ADP + phosphate + H(+). The protein operates within cell wall biogenesis; peptidoglycan biosynthesis. Functionally, cell wall formation. This Shewanella sp. (strain MR-4) protein is UDP-N-acetylmuramate--L-alanine ligase.